We begin with the raw amino-acid sequence, 194 residues long: Methylated-DNA--protein-cysteine methyltransferase (194 aa).

Residues tyrosine 125 and arginine 139 each contribute to the DNA site. Catalysis depends on cysteine 156, which acts as the Nucleophile; methyl group acceptor. A DNA-binding site is contributed by serine 162.

It belongs to the MGMT family.

It is found in the nucleus. The enzyme catalyses a 6-O-methyl-2'-deoxyguanosine in DNA + L-cysteinyl-[protein] = S-methyl-L-cysteinyl-[protein] + a 2'-deoxyguanosine in DNA. It catalyses the reaction a 4-O-methyl-thymidine in DNA + L-cysteinyl-[protein] = a thymidine in DNA + S-methyl-L-cysteinyl-[protein]. Its function is as follows. Involved in the cellular defense against the biological effects of O6-methylguanine (O6-MeG) and O4-methylthymine (O4-MeT) in DNA. Repairs the methylated nucleobase in DNA by stoichiometrically transferring the methyl group to a cysteine residue in the enzyme. This is a suicide reaction: the enzyme is irreversibly inactivated. This chain is Methylated-DNA--protein-cysteine methyltransferase (MGT1), found in Scheffersomyces stipitis (strain ATCC 58785 / CBS 6054 / NBRC 10063 / NRRL Y-11545) (Yeast).